We begin with the raw amino-acid sequence, 162 residues long: ATP synthase subunit b (162 aa).

The chain crosses the membrane as a helical span at residues leucine 6 to phenylalanine 28.

The protein belongs to the ATPase B chain family. As to quaternary structure, F-type ATPases have 2 components, F(1) - the catalytic core - and F(0) - the membrane proton channel. F(1) has five subunits: alpha(3), beta(3), gamma(1), delta(1), epsilon(1). F(0) has three main subunits: a(1), b(2) and c(10-14). The alpha and beta chains form an alternating ring which encloses part of the gamma chain. F(1) is attached to F(0) by a central stalk formed by the gamma and epsilon chains, while a peripheral stalk is formed by the delta and b chains.

The protein resides in the cell membrane. F(1)F(0) ATP synthase produces ATP from ADP in the presence of a proton or sodium gradient. F-type ATPases consist of two structural domains, F(1) containing the extramembraneous catalytic core and F(0) containing the membrane proton channel, linked together by a central stalk and a peripheral stalk. During catalysis, ATP synthesis in the catalytic domain of F(1) is coupled via a rotary mechanism of the central stalk subunits to proton translocation. Functionally, component of the F(0) channel, it forms part of the peripheral stalk, linking F(1) to F(0). This is ATP synthase subunit b from Natranaerobius thermophilus (strain ATCC BAA-1301 / DSM 18059 / JW/NM-WN-LF).